Consider the following 128-residue polypeptide: Small ribosomal subunit protein eS8 (128 aa).

It belongs to the eukaryotic ribosomal protein eS8 family. In terms of assembly, part of the 30S ribosomal subunit.

This chain is Small ribosomal subunit protein eS8, found in Metallosphaera sedula (strain ATCC 51363 / DSM 5348 / JCM 9185 / NBRC 15509 / TH2).